Here is a 276-residue protein sequence, read N- to C-terminus: Elongation factor Ts, mitochondrial (276 aa).

Belongs to the EF-Ts family.

Its subcellular location is the mitochondrion. In terms of biological role, associates with the EF-Tu.GDP complex and induces the exchange of GDP to GTP. It remains bound to the aminoacyl-tRNA.EF-Tu.GTP complex up to the GTP hydrolysis stage on the ribosome. This Leishmania major protein is Elongation factor Ts, mitochondrial.